A 448-amino-acid polypeptide reads, in one-letter code: Probable glycine dehydrogenase (decarboxylating) subunit 1 (448 aa).

It belongs to the GcvP family. N-terminal subunit subfamily. The glycine cleavage system is composed of four proteins: P, T, L and H. In this organism, the P 'protein' is a heterodimer of two subunits.

The catalysed reaction is N(6)-[(R)-lipoyl]-L-lysyl-[glycine-cleavage complex H protein] + glycine + H(+) = N(6)-[(R)-S(8)-aminomethyldihydrolipoyl]-L-lysyl-[glycine-cleavage complex H protein] + CO2. Its function is as follows. The glycine cleavage system catalyzes the degradation of glycine. The P protein binds the alpha-amino group of glycine through its pyridoxal phosphate cofactor; CO(2) is released and the remaining methylamine moiety is then transferred to the lipoamide cofactor of the H protein. The chain is Probable glycine dehydrogenase (decarboxylating) subunit 1 from Parvibaculum lavamentivorans (strain DS-1 / DSM 13023 / NCIMB 13966).